The chain runs to 155 residues: MYCPFCHAEETKVVDSRLVADGAQVRRRRECLECHERFTTFETAELIMPLIIKRDGRREPFHIDNLRSGMLRALEKRPVSVDDLEKAIISITEEIRRRGEREIDSQVVGELVMKELFRLDHVAYVRFASVYKRFKDVSDFRQTIDQMKNEDKEKS.

A zinc finger lies at 3–34 (CPFCHAEETKVVDSRLVADGAQVRRRRECLEC). Residues 49 to 139 (PLIIKRDGRR…VYKRFKDVSD (91 aa)) enclose the ATP-cone domain.

This sequence belongs to the NrdR family. Requires Zn(2+) as cofactor.

Negatively regulates transcription of bacterial ribonucleotide reductase nrd genes and operons by binding to NrdR-boxes. This chain is Transcriptional repressor NrdR, found in Legionella pneumophila (strain Paris).